Reading from the N-terminus, the 328-residue chain is Sphingolipid delta(4)-desaturase DES1-like (328 aa).

A run of 3 helical transmembrane segments spans residues 50–70 (PLAF…ATLL), 78–98 (ILTV…LAIH), and 114–134 (WLGI…FQKY). Residues 98–102 (HELSH) carry the Histidine box-1 motif. Residues 135 to 139 (HLEHH) carry the Histidine box-2 motif. Transmembrane regions (helical) follow at residues 164–184 (LSKS…PLFL), 192–212 (WEFT…YFFG), and 217–237 (AYLI…GHFI). Residues 266 to 270 (HNEHH) carry the Histidine box-3 motif.

The protein belongs to the fatty acid desaturase type 1 family. DEGS subfamily.

It is found in the endoplasmic reticulum membrane. It catalyses the reaction an N-acylsphinganine + 2 Fe(II)-[cytochrome b5] + O2 + 2 H(+) = an N-acylsphing-4-enine + 2 Fe(III)-[cytochrome b5] + 2 H2O. Its function is as follows. Sphingolipid-delta-4-desaturase required for the biosynthesis of delta-4-unsaturated sphingolipids and derivatives. This is Sphingolipid delta(4)-desaturase DES1-like from Oryza sativa subsp. japonica (Rice).